Consider the following 61-residue polypeptide: Large ribosomal subunit protein uL30 (61 aa).

This sequence belongs to the universal ribosomal protein uL30 family. Part of the 50S ribosomal subunit.

This is Large ribosomal subunit protein uL30 from Corynebacterium diphtheriae (strain ATCC 700971 / NCTC 13129 / Biotype gravis).